We begin with the raw amino-acid sequence, 314 residues long: tRNA dimethylallyltransferase (314 aa).

36–43 (GPTASGKT) contributes to the ATP binding site. Residue 38-43 (TASGKT) participates in substrate binding. The segment at 61–64 (DSVQ) is interaction with substrate tRNA.

This sequence belongs to the IPP transferase family. Monomer. The cofactor is Mg(2+).

It carries out the reaction adenosine(37) in tRNA + dimethylallyl diphosphate = N(6)-dimethylallyladenosine(37) in tRNA + diphosphate. Its function is as follows. Catalyzes the transfer of a dimethylallyl group onto the adenine at position 37 in tRNAs that read codons beginning with uridine, leading to the formation of N6-(dimethylallyl)adenosine (i(6)A). This is tRNA dimethylallyltransferase from Sorangium cellulosum (strain So ce56) (Polyangium cellulosum (strain So ce56)).